The primary structure comprises 377 residues: Guanine nucleotide exchange factor for Rab-3A (377 aa).

A disordered region spans residues 23–57 (WKNLGPSKGNRKSPGGLVEASASWEEAGGEEHPAA). Residues 77–128 (SEFLKEELYKAQKELKLKDEECERLCKVRAQLEQELEELTASLFEEAHKMVR) are a coiled coil. Residues 167–198 (PASPNRELHPQLLSPTKAGPRKGHSRQKSTSS) are disordered. Phosphoserine occurs at positions 169 and 180.

This sequence belongs to the SEC2 family. Interacts with RAB3A and IHPK1 through the coiled-coil domain. This interaction is competitive. IHPK1 kinase activity is not required for this interaction. As to expression, selectively localized to the brain (at protein level).

Functionally, guanine nucleotide exchange factor (GEF) which may activate RAB3A, a GTPase that regulates synaptic vesicle exocytosis. Promotes the exchange of GDP to GTP, converting inactive GDP-bound Rab proteins into their active GTP-bound form. May also activate RAB8A and RAB8B. This is Guanine nucleotide exchange factor for Rab-3A (Rab3il1) from Rattus norvegicus (Rat).